Here is a 151-residue protein sequence, read N- to C-terminus: MARLHSGKRGSSGSTRPLRTEVPEWVSMSAEDIEAKIVEMAKDGKQSAIIGNILRDMYGVPNVKLITGKSVSSIMKEAGFYAEVPEDLFNLMKKAINLRNHLENNPRDTHSTVGLKLIESKIRRLVKYYRGTKVLPAKWRYSPETARLLVE.

The tract at residues 1 to 20 is disordered; it reads MARLHSGKRGSSGSTRPLRT.

It belongs to the universal ribosomal protein uS15 family. Part of the 30S ribosomal subunit.

In Methanococcus maripaludis (strain DSM 14266 / JCM 13030 / NBRC 101832 / S2 / LL), this protein is Small ribosomal subunit protein uS15.